Consider the following 443-residue polypeptide: Protein king tubby (443 aa).

Disordered regions lie at residues 57 to 80 and 98 to 191; these read TNGS…NNMR and HELE…EGDV. A compositionally biased stretch (polar residues) spans 68-80; it reads AMNTSRNHSNNMR. The segment covering 113–128 has biased composition (low complexity); that stretch reads QHQQSASHSANSTQSQ. Phosphoserine is present on Ser136. The span at 177-186 shows a compositional bias: gly residues; it reads NGTGNGTGGE.

Belongs to the TUB family.

The protein resides in the cytoplasm. Its subcellular location is the nucleus. The protein localises to the cell projection. It localises to the cilium membrane. It is found in the rhabdomere. The sequence is that of Protein king tubby from Drosophila simulans (Fruit fly).